Consider the following 87-residue polypeptide: Phosphocarrier protein HPr (87 aa).

Residues 1–87 (MEKIFKVTSD…ETMKNEGLGE (87 aa)) form the HPr domain. His14 serves as the catalytic Pros-phosphohistidine intermediate; alternate. At His14 the chain carries Tele-phosphohistidine; alternate. Ser45 bears the Phosphoserine; by HPrK/P mark.

The protein belongs to the HPr family. In terms of processing, the form phosphorylated at the tele nitrogen (N(epsilon)2), instead of the expected pros nitrogen (N(delta)1), of His-14 is not able to transfer its phosphoryl group to the B.subtilis EIIA-Glc domain. This form may be inactive in PTS-catalyzed sugar transport or target an as yet unknown acceptor molecule in an alternative metabolic process.

The protein resides in the cytoplasm. With respect to regulation, phosphorylation on Ser-45 inhibits the phosphoryl transfer from enzyme I to HPr. In terms of biological role, general (non sugar-specific) component of the phosphoenolpyruvate-dependent sugar phosphotransferase system (sugar PTS). This major carbohydrate active-transport system catalyzes the phosphorylation of incoming sugar substrates concomitantly with their translocation across the cell membrane. The phosphoryl group from phosphoenolpyruvate (PEP) is transferred to the phosphoryl carrier protein HPr by enzyme I. Phospho-HPr then transfers it to the PTS EIIA domain. P-Ser-HPr interacts with the catabolite control protein A (CcpA), forming a complex that binds to DNA at the catabolite response elements cre, operator sites preceding a large number of catabolite-regulated genes. Thus, P-Ser-HPr is a corepressor in carbon catabolite repression (CCR), a mechanism that allows bacteria to coordinate and optimize the utilization of available carbon sources. P-Ser-HPr mediates glucose catabolite repression of cry4A toxin expression. This is Phosphocarrier protein HPr (ptsH) from Bacillus thuringiensis subsp. israelensis.